A 64-amino-acid chain; its full sequence is Large ribosomal subunit protein bL28 (64 aa).

Residues 1–23 (MSKECYFTGRKTVSSNNRSHAMN) are disordered. A compositionally biased stretch (polar residues) spans 11-23 (KTVSSNNRSHAMN).

Belongs to the bacterial ribosomal protein bL28 family.

The polypeptide is Large ribosomal subunit protein bL28 (Lactococcus lactis subsp. cremoris (strain SK11)).